The primary structure comprises 266 residues: Enterotoxin type C-2 (266 aa).

Residues 1–27 form the signal peptide; sequence MNKSRFISCVILIFALILVLFTPNVLA. Residues Asp-36, His-74, Glu-98, Glu-107, and Asp-110 each coordinate Zn(2+). Cys-120 and Cys-137 are joined by a disulfide. Positions 145, 146, and 149 each coordinate Zn(2+).

This sequence belongs to the staphylococcal/streptococcal toxin family. In terms of assembly, interacts with host MHC class II molecules composed of alpha/HLA-DRA and beta/HLA-DRB1 chains. Zn(2+) is required as a cofactor.

It localises to the secreted. Functionally, staphylococcal enterotoxin that activates the host immune system by binding as unprocessed molecules to major histocompatibility (MHC) complex class II and T-cell receptor (TCR) molecules. In turn, this ternary complex activates a large number of T-lymphocytes initiating a systemic release of pro-inflammatory cytokines. Also causes the intoxication staphylococcal food poisoning syndrome. The protein is Enterotoxin type C-2 (entC2) of Staphylococcus aureus.